The sequence spans 178 residues: MEVASSSSACQFDNLNNNNNELKPVRPKRDFRFKVIEVQNGPKWFVWPSRNRGSSEDVDENDNKKVSQPQNNGFGALRRSVIRQSKRKQDQDAIAARTASEPASARRLSAKKEKAVTEPLNQVSSMFKIISIEKNWESFDATDNEDNDEDLEDGARTVSVISLTSVIEGGERRWTTSI.

The segment covering 1 to 13 (MEVASSSSACQFD) has biased composition (polar residues). Disordered regions lie at residues 1–24 (MEVASSSSACQFDNLNNNNNELKP) and 47–114 (WPSR…KKEK).

This is an uncharacterized protein from Caenorhabditis elegans.